We begin with the raw amino-acid sequence, 252 residues long: Ribosomal RNA small subunit methyltransferase A (252 aa).

S-adenosyl-L-methionine-binding residues include Asn-11, Leu-13, Gly-38, Glu-60, Asp-82, and Asn-99.

It belongs to the class I-like SAM-binding methyltransferase superfamily. rRNA adenine N(6)-methyltransferase family. RsmA subfamily.

The protein localises to the cytoplasm. The enzyme catalyses adenosine(1518)/adenosine(1519) in 16S rRNA + 4 S-adenosyl-L-methionine = N(6)-dimethyladenosine(1518)/N(6)-dimethyladenosine(1519) in 16S rRNA + 4 S-adenosyl-L-homocysteine + 4 H(+). Specifically dimethylates two adjacent adenosines (A1518 and A1519) in the loop of a conserved hairpin near the 3'-end of 16S rRNA in the 30S particle. May play a critical role in biogenesis of 30S subunits. The polypeptide is Ribosomal RNA small subunit methyltransferase A (Hydrogenobaculum sp. (strain Y04AAS1)).